Reading from the N-terminus, the 607-residue chain is MPYEIKKVFASLPQVERGVAKIIAGDPKGNNFLYTNGKSVIIRNIDNPAIADIYTEHAHQVVVARYAPSGFYIASGDTSGKLRIWDTTQKEHLLKYEYQPFAGKIKDIAWTEDSKRIAVVGEGREKFGSVFLWDTGSSVGEIIGNIKVINSVDIKQTRPYRLVTGSDDNCCAFFEGPPFKFKFTMSDHSRFVNCVRFSPDGSRLASAGADGQIFLYDGKTGEKVCSLGGSKAHDGGIYAVSWSPDGTQLLSASGDKTAKIWDVAANSAVTTFNLGSDVLDQQLGCLWQKDYLLSVSLSGYINYLDKNNPAKPFRIIKGHNKSIQCMTVDKSDGRSTIYTGSHDGHINYWDAETGENNTFTGKGHTNQVSSMDLDGSSQLITCSMDDTLRYTNLISKDYSSSESVKMDVQPKCVAVGSGGYVVTVCIGQIVLLKDKKKVFAIDSLDYEPEAVAIHKGSGTVSVGGADGKVHLYSIQGNSLKDEGKTLPAKGAVTDLAYSPDGAFLAVTDANKVVTVFSVADGYSEHNSYYGHHAKALSVAWSPDNEHFASSGMDMMVYVWTLSDPDTRIKMPDAHRLHHVSSLAWLDENTLATVSHDACVKQWTVTFK.

WD repeat units follow at residues Glu4–Ile45, Pro48–Thr87, Leu93–Thr135, Ser138–Gly176, Lys180–Gly218, Val224–Val263, Thr270–Lys306, Lys311–Ala351, Thr358–Val408, Leu432–Ile474, Lys480–Val518, Ser523–Leu561, and Thr566–Val604.

It belongs to the WD repeat AIP1 family.

It localises to the cell membrane. Its subcellular location is the cytoplasm. It is found in the cytoskeleton. The protein resides in the nucleus. Functionally, induces disassembly of actin filaments in conjunction with ADF/cofilin family proteins. Doesn't sever actin filaments alone, but caps the barbed ends of filaments severed by cofilin, which blocks annealing and depolymerization and allows more extensive severing by cofilin. This chain is WD repeat-containing protein 1-B (wdr1-b), found in Xenopus laevis (African clawed frog).